The following is a 149-amino-acid chain: SsrA-binding protein (149 aa).

The protein belongs to the SmpB family.

Its subcellular location is the cytoplasm. Required for rescue of stalled ribosomes mediated by trans-translation. Binds to transfer-messenger RNA (tmRNA), required for stable association of tmRNA with ribosomes. tmRNA and SmpB together mimic tRNA shape, replacing the anticodon stem-loop with SmpB. tmRNA is encoded by the ssrA gene; the 2 termini fold to resemble tRNA(Ala) and it encodes a 'tag peptide', a short internal open reading frame. During trans-translation Ala-aminoacylated tmRNA acts like a tRNA, entering the A-site of stalled ribosomes, displacing the stalled mRNA. The ribosome then switches to translate the ORF on the tmRNA; the nascent peptide is terminated with the 'tag peptide' encoded by the tmRNA and targeted for degradation. The ribosome is freed to recommence translation, which seems to be the essential function of trans-translation. The protein is SsrA-binding protein of Mesoplasma florum (strain ATCC 33453 / NBRC 100688 / NCTC 11704 / L1) (Acholeplasma florum).